The following is a 521-amino-acid chain: Medium/long-chain-fatty-acid--[acyl-carrier-protein] ligase MbtM (521 aa).

Positions 146-172 are disordered; the sequence is RRCPEPPAPHANPAILQGTAGSTGTPK.

The protein belongs to the ATP-dependent AMP-binding enzyme family.

It catalyses the reaction a long-chain fatty acid + holo-[ACP] + ATP = a long-chain fatty acyl-[ACP] + AMP + diphosphate. The catalysed reaction is a medium-chain fatty acid + holo-[ACP] + ATP = a medium-chain fatty acyl-[ACP] + AMP + diphosphate. Its pathway is siderophore biosynthesis; mycobactin biosynthesis. Functionally, activates lipidic moieties required for mycobactin biosynthesis. Converts medium- to long-chain aliphatic fatty acids into acyl adenylate, which is further transferred on to the phosphopantetheine arm of the carrier protein MbtL. This chain is Medium/long-chain-fatty-acid--[acyl-carrier-protein] ligase MbtM (mbtM), found in Mycolicibacterium paratuberculosis (strain ATCC BAA-968 / K-10) (Mycobacterium paratuberculosis).